The following is a 1228-amino-acid chain: DNA-directed RNA polymerase subunit beta (1228 aa).

The interval 1175–1204 is disordered; that stretch reads ESVDEDEQPQGLGAFEIGGDEIEEDKEDDK. The span at 1192–1202 shows a compositional bias: acidic residues; sequence GGDEIEEDKED.

The protein belongs to the RNA polymerase beta chain family. The RNAP catalytic core consists of 2 alpha, 1 beta, 1 beta' and 1 omega subunit. When a sigma factor is associated with the core the holoenzyme is formed, which can initiate transcription.

It carries out the reaction RNA(n) + a ribonucleoside 5'-triphosphate = RNA(n+1) + diphosphate. DNA-dependent RNA polymerase catalyzes the transcription of DNA into RNA using the four ribonucleoside triphosphates as substrates. In Caldicellulosiruptor bescii (strain ATCC BAA-1888 / DSM 6725 / KCTC 15123 / Z-1320) (Anaerocellum thermophilum), this protein is DNA-directed RNA polymerase subunit beta.